A 318-amino-acid chain; its full sequence is Taste receptor type 2 member 60 (318 aa).

At 1-7 (MNGDHMV) the chain is on the extracellular side. Residues 8–28 (LGSSVTDKKAIILVTILLLLR) traverse the membrane as a helical segment. The Cytoplasmic portion of the chain corresponds to 29-40 (LVAIAGNGFITA). The chain crosses the membrane as a helical span at residues 41 to 61 (ALGVEWVLRRMLLPCDKLLVS). Residues 62 to 88 (LGASHFCLQSVVMGKTIYVFLYPMAFP) lie on the Extracellular side of the membrane. Residues 89-109 (YNPVLQFLAFQWDFLNAATLW) traverse the membrane as a helical segment. Residues 110–128 (FSTWLSVFYCVKIATFTHP) lie on the Cytoplasmic side of the membrane. Residues 129-149 (VFFWLKHKLSGWLPWMIFSYV) form a helical membrane-spanning segment. The Extracellular segment spans residues 150–183 (GLSSFTTILFFIGNHRMYQNYLKNHLQPWNVTGN). The N-linked (GlcNAc...) asparagine glycan is linked to Asn-179. A helical membrane pass occupies residues 184–204 (SIRSYCEKFYLFPLKMITWTM). Over 205 to 234 (PTAVFFICMILLITSLGRHMKKALLTTSGF) the chain is Cytoplasmic. Residues 235-255 (REPSVQAHIKALLALLSFAML) traverse the membrane as a helical segment. At 256 to 264 (FISYFLSLV) the chain is on the extracellular side. The helical transmembrane segment at 265–285 (FSAAGIFPPLDFKFWVWESVI) threads the bilayer. Topologically, residues 286–318 (YLCAAVHPIILLFSNCRLRAVLKSRRSSRCGTP) are cytoplasmic.

It belongs to the G-protein coupled receptor T2R family.

The protein localises to the membrane. Its function is as follows. Receptor that may play a role in the perception of bitterness and is gustducin-linked. May play a role in sensing the chemical composition of the gastrointestinal content. The activity of this receptor may stimulate alpha gustducin, mediate PLC-beta-2 activation and lead to the gating of TRPM5. The chain is Taste receptor type 2 member 60 (TAS2R60) from Pan paniscus (Pygmy chimpanzee).